A 342-amino-acid chain; its full sequence is Ubiquitin fusion degradation protein 1 homolog (342 aa).

2 disordered regions span residues 245–276 and 318–342; these read FGGA…SNAA and EKEA…RGAR. Positions 259 to 275 are enriched in polar residues; it reads SSSVSLSDGTGVSTSNA.

The protein belongs to the UFD1 family. Forms a complex composed of ubxn-3, ufd-1, npl-4.1 and cdc-48.1; within the complex interacts with cdc-48.1. Interacts with cdc-48.2. Interacts with npl-4.1 and/or npl-4.2.

It is found in the cytoplasm. The protein resides in the nucleus. Its function is as follows. Functions at a post-ubiquitination step in the ubiquitin fusion degradation (UFD) pathway. In association with npl-4.1 and/or npl-4.2 and ATPase cdc-48.1 and/or cdc-48.2, involved in the cytoplasmic elimination of misfolded proteins exported from the ER. This pathway, known as ERAD, prevents the activation of the unfolded protein response (UPR) caused by the accumulation of misfolded proteins in the ER. During S phase and in association with npl-4.1 and/or npl-4.2, cdc-48.1 and/or cdc-48.2 and ubxn-3, ensures the degradation of DNA licensing factor cdt-1 after the initiation of DNA replication and thus the disassembly of the DNA replication CMG helicase complex by promoting the dissociation from chromatin of several of its components including cdc-45 and sld-5. Regulates ubxn-3 nuclear localization during S phase. In Caenorhabditis elegans, this protein is Ubiquitin fusion degradation protein 1 homolog (ufd-1).